The chain runs to 718 residues: MKLAKKWRDWYIESGKKYLFPLLLVCFAVIAYFLVCQMTKPESYNVKLFQVAEKTIRSPQTVEDTEKTKEERTKASDAVEDVYVYNRETGQNRVALIQSLFAYVNEVNAEAQEKDTKNKEKAKKENKPAPAPTSTEDKLKNLKDKLSSNVSEKITSNISDEVFTTLIEAKSKDFNVMEDVVTTEVEKSMENKIRDENLNSVKIRARDDIELSAIPAYYKNVSKALVSYAIVPNEVYDEEQTDARRKEAAQSVVPVKILQGQVIVQEGQIVDRETYRQLKMLHLLDQKMPVKQYAGFAIFIIALAAILFLYTKKQTQPKAKKMQTMLIFSSVYLVSLFMLFIILFLETQNIANIAFLFPAAFAPMILKILLNEKYAFLSVIFIAVTSLLTFQNDATSGITIFILLSGATSVVMLRDYSRRSAIMLSGFMVGLINMIYVLLLLLINNSTLLQVSTLMALGYAFLGGFGAFILGVGVIPLFETIFGLLTTSRLVELANPNHPLLKKILMKAPGTYHHSMMVANLAEACADKIGANSLLVRVGCFYHDIGKTLRPPYFVENQLQGINPHDRLTPEQSRDIILSHTKDGAEILKENHMPQPIIDIALQHHGTTLLKYFYFKAKETNPDVKEADYRYSGPKPQTKEIAIINISDSVEAAVRSSTEPTMAKITEIIDGIIKDRFLDGQFTECDITIQEIKIIRDTLIATLNGIYHQRIQYPDDKD.

At 1 to 17 (MKLAKKWRDWYIESGKK) the chain is on the cytoplasmic side. The chain crosses the membrane as a helical span at residues 18-38 (YLFPLLLVCFAVIAYFLVCQM). Topologically, residues 39 to 289 (TKPESYNVKL…MLHLLDQKMP (251 aa)) are extracellular. Over residues 112 to 127 (QEKDTKNKEKAKKENK) the composition is skewed to basic and acidic residues. A disordered region spans residues 112-140 (QEKDTKNKEKAKKENKPAPAPTSTEDKLK). A helical transmembrane segment spans residues 290–310 (VKQYAGFAIFIIALAAILFLY). The Cytoplasmic portion of the chain corresponds to 311–324 (TKKQTQPKAKKMQT). A helical transmembrane segment spans residues 325-345 (MLIFSSVYLVSLFMLFIILFL). The Extracellular segment spans residues 346–349 (ETQN). Transmembrane regions (helical) follow at residues 350–370 (IANI…KILL) and 371–391 (NEKY…LTFQ). Asn-392 is a topological domain (extracellular). Residues 393–413 (DATSGITIFILLSGATSVVML) form a helical membrane-spanning segment. The Cytoplasmic portion of the chain corresponds to 414–421 (RDYSRRSA). Residues 422–442 (IMLSGFMVGLINMIYVLLLLL) traverse the membrane as a helical segment. At 443 to 457 (INNSTLLQVSTLMAL) the chain is on the extracellular side. Residues 458–478 (GYAFLGGFGAFILGVGVIPLF) traverse the membrane as a helical segment. The Cytoplasmic segment spans residues 479 to 718 (ETIFGLLTTS…QRIQYPDDKD (240 aa)). One can recognise an HD domain in the interval 511–653 (TYHHSMMVAN…INISDSVEAA (143 aa)). His-514, His-543, and Asp-544 together coordinate Mn(2+). Residue His-514 coordinates substrate. Substrate-binding positions include 544-547 (DIGK) and 555-556 (VE). Mn(2+) contacts are provided by His-580, His-604, and His-605. Substrate is bound by residues Tyr-631 and Asp-648. Residue Asp-648 coordinates Mn(2+).

This sequence belongs to the PgpH phosphodiesterase family. Requires Mn(2+) as cofactor.

It localises to the cell membrane. The enzyme catalyses 3',3'-c-di-AMP + H2O = 5'-O-phosphonoadenylyl-(3'-&gt;5')-adenosine + H(+). With respect to regulation, c-di-AMP hydrolysis inhibited by ppGpp, without altering c-di-AMP binding. In terms of biological role, a phosphodiesterase (PDE) that hydrolyzes cyclic di-3',5'-adenylate (c-di-AMP); there are at least 2 PDEs for c-di-AMP in this bacteria (this and pdeA), this may be the major PDE for growth in liquid culture. During host infection c-di-AMP is secreted into the host cytoplasm which leads to interferon-beta production and secretion by the host. The cytoplasmic HD domain binds and hydrolyzes c-di-AMP to 5'-pApA; has very low activity against c-di-GMP, does not hydrolyze ppGpp. The protein is Cyclic-di-AMP phosphodiesterase PgpH of Listeria monocytogenes serotype 1/2a (strain 10403S).